The primary structure comprises 298 residues: Ribosomal RNA small subunit methyltransferase H (298 aa).

S-adenosyl-L-methionine is bound by residues 46–48 (GGH), D65, F92, D108, and H115.

This sequence belongs to the methyltransferase superfamily. RsmH family.

The protein resides in the cytoplasm. The catalysed reaction is cytidine(1402) in 16S rRNA + S-adenosyl-L-methionine = N(4)-methylcytidine(1402) in 16S rRNA + S-adenosyl-L-homocysteine + H(+). Functionally, specifically methylates the N4 position of cytidine in position 1402 (C1402) of 16S rRNA. This chain is Ribosomal RNA small subunit methyltransferase H, found in Nostoc punctiforme (strain ATCC 29133 / PCC 73102).